We begin with the raw amino-acid sequence, 100 residues long: Small ribosomal subunit protein uS14 (100 aa).

It belongs to the universal ribosomal protein uS14 family. As to quaternary structure, part of the 30S ribosomal subunit. Contacts proteins S3 and S10.

In terms of biological role, binds 16S rRNA, required for the assembly of 30S particles and may also be responsible for determining the conformation of the 16S rRNA at the A site. This Synechococcus sp. (strain CC9605) protein is Small ribosomal subunit protein uS14.